Reading from the N-terminus, the 181-residue chain is Ribonuclease HII (181 aa).

Positions 1-181 constitute an RNase H type-2 domain; sequence MICGIDEVGR…SLHRRNFKLI (181 aa). Positions 6, 7, and 98 each coordinate a divalent metal cation.

This sequence belongs to the RNase HII family. The cofactor is Mn(2+). Mg(2+) serves as cofactor.

Its subcellular location is the cytoplasm. The catalysed reaction is Endonucleolytic cleavage to 5'-phosphomonoester.. Functionally, endonuclease that specifically degrades the RNA of RNA-DNA hybrids. In Borrelia garinii subsp. bavariensis (strain ATCC BAA-2496 / DSM 23469 / PBi) (Borreliella bavariensis), this protein is Ribonuclease HII.